A 711-amino-acid polypeptide reads, in one-letter code: Putative membrane protein IgaA homolog (711 aa).

A topological domain (periplasmic) is located at residue Met-1. The chain crosses the membrane as a helical span at residues 2–22; it reads STIVIFLAALLACSLLAGWLI. Topologically, residues 23–204 are cytoplasmic; the sequence is KVRSRRRQLP…YALSRPRGLR (182 aa). A run of 2 helical transmembrane segments spans residues 205–225 and 226–246; these read EALL…TPDV and FVPW…WGLF. The Cytoplasmic portion of the chain corresponds to 247-339; it reads APPAKSSLRE…KNFPLQHWLR (93 aa). Residues 340–360 traverse the membrane as a helical segment; the sequence is STIIAAGSLLVLFMLLFWIPL. Residues 361 to 655 lie on the Periplasmic side of the membrane; the sequence is DMPLKFTLSW…IPDRSGLWRY (295 aa). Residues 656–676 traverse the membrane as a helical segment; it reads LSTTLLLLTMLGSAIYNGVQA. Residues 677–711 are Cytoplasmic-facing; that stretch reads WRRYQRHRTRMMKIQAYYESCLNPQLITPSESLIE.

It belongs to the IgaA family.

It localises to the cell inner membrane. The sequence is that of Putative membrane protein IgaA homolog (yrfF) from Escherichia coli O157:H7.